The sequence spans 4963 residues: Kettin homolog (4963 aa).

Ig-like domains lie at 18–105 (PTFI…TCIL), 133–220 (PSAP…EAIS), and 303–392 (PIIR…ARIE). 5 disordered regions span residues 396–420 (LSVP…QQQQ), 466–501 (RRQL…EEER), 557–578 (IRPH…RQEV), 598–622 (QLYQ…QQRF), and 652–696 (TNGG…GHEH). Composition is skewed to basic and acidic residues over residues 399–417 (PDER…RDRQ), 466–475 (RRQLEHEKRL), and 484–501 (FERE…EEER). The stretch at 401-517 (ERRKENQLRE…KHLRQQQQTQ (117 aa)) forms a coiled coil. The segment covering 557-576 (IRPHQQQQQHYQQQQQSPRQ) has biased composition (low complexity). The span at 658 to 685 (AANGSAKTANGSANGSANGSAVHAANGG) shows a compositional bias: low complexity. Ig-like domains follow at residues 706-796 (PQFL…FSLN), 806-893 (PEFT…GRVV), 937-1027 (PKFE…ANIA), 1065-1155 (PNFH…ATII), 1199-1281 (FHCE…AELT), 1462-1554 (PKFL…ITVT), 1594-1687 (PPTF…ATIR), 1728-1819 (PAFV…VDIN), 1992-2085 (PPVF…IFLE), 2126-2217 (PTFT…CTVK), 2258-2350 (PKFV…ANFT), 2391-2481 (PQFI…AQLT), 2522-2613 (PKFV…GQLS), 2654-2745 (PSFV…ANVG), 2787-2878 (PQWV…ATVT), 2919-3010 (PNFL…ASIR), 3051-3141 (PAIT…ATLK), 3182-3273 (PRFI…ATIE), 3314-3407 (PAIV…FEVS), and 3448-3539 (PVFI…TKLT). An intrachain disulfide couples Cys827 to Cys877. Cysteines 1201 and 1265 form a disulfide. The cysteines at positions 1618 and 1671 are disulfide-linked. Disulfide bonds link Cys2016/Cys2069 and Cys2148/Cys2201. The span at 3567 to 3583 (EAPRPAREDAPDADHGP) shows a compositional bias: basic and acidic residues. Positions 3567–3590 (EAPRPAREDAPDADHGPPKFTSAL) are disordered. Ig-like domains follow at residues 3584–3677 (PKFT…LKVV), 3720–3811 (PSFS…GKIA), 3821–3913 (PQVV…TKIT), 3962–4052 (PEFR…AKLA), and 4098–4185 (PQFT…ATLD). Intrachain disulfides connect Cys3606–Cys3659 and Cys3742–Cys3795. The segment at 4193 to 4963 (RQTKLRPANF…TSQAKLTLSR (771 aa)) is required for F-actin binding. Positions 4319 to 4329 (DQQEVGWERPD) are enriched in basic and acidic residues. The interval 4319–4357 (DQQEVGWERPDWAGQDGTSKLPGADEGRFKKLPTPAPEL) is disordered. 4 Ig-like domains span residues 4546 to 4634 (PTIS…ANLT), 4645 to 4733 (PDFS…ARLN), 4752 to 4842 (PRFT…LVLT), and 4872 to 4960 (PHFI…AKLT).

As to quaternary structure, interacts (via Ig-like domains) with F-actin. In terms of tissue distribution, expressed in the pharyngeal, body wall, and anal depressor muscles. Expression in these muscles is higher in hermaphrodites than in males. Expressed in the vulva and the myoepithelial sheath of the proximal ovary. Expressed in the proximal gonad of males. Not expressed in the dense bodies of the obliquely striated body wall muscle.

The protein resides in the cytoplasm. It is found in the myofibril. The protein localises to the sarcomere. It localises to the cytoskeleton. Positively regulates actin filament organization and provides mechanical stability to the myofibrils during body wall muscle contraction. Required for the organization of sarcomeric actin filaments and myosin protein myo-3 in striated body wall muscle cells. Not required for assembly of dense bodies, which are a type of integrin-based adhesion structure that link the plasma membrane to thin filaments of myofibrils, in body wall muscle. Not required for the atn-1 protein to localize to the dense bodies. This chain is Kettin homolog, found in Caenorhabditis elegans.